A 222-amino-acid chain; its full sequence is Superoxide dismutase [Mn], mitochondrial (222 aa).

Residues 1–24 constitute a mitochondrion transit peptide; it reads MLSRAVCGTGRQLAPALGYLGSRQ. His-50 lines the Mn(2+) pocket. The residue at position 58 (Tyr-58) is a 3'-nitrotyrosine. N6-acetyllysine; alternate occurs at positions 68 and 75. Residues Lys-68 and Lys-75 each carry the N6-succinyllysine; alternate modification. His-98 contacts Mn(2+). At Lys-114 the chain carries N6-acetyllysine. N6-acetyllysine; alternate occurs at positions 122 and 130. Lys-122 and Lys-130 each carry N6-succinyllysine; alternate. Mn(2+) contacts are provided by Asp-183 and His-187. At Lys-202 the chain carries N6-acetyllysine.

Belongs to the iron/manganese superoxide dismutase family. In terms of assembly, homotetramer. Requires Mn(2+) as cofactor. In terms of processing, nitrated under oxidative stress. Nitration coupled with oxidation inhibits the catalytic activity. Post-translationally, acetylation at Lys-122 decreases enzymatic activity. Deacetylated by SIRT3 upon exposure to ionizing radiations or after long fasting. Polyubiquitinated; leading to proteasomal degradation. Deubiquitinated by USP36 which increases protein stability.

It is found in the mitochondrion matrix. It catalyses the reaction 2 superoxide + 2 H(+) = H2O2 + O2. Functionally, destroys superoxide anion radicals which are normally produced within the cells and which are toxic to biological systems. The chain is Superoxide dismutase [Mn], mitochondrial (SOD2) from Macaca nemestrina (Pig-tailed macaque).